Reading from the N-terminus, the 306-residue chain is Ribosomal protein L11 methyltransferase (306 aa).

Residues Thr139, Gly173, Asp195, and Asn242 each coordinate S-adenosyl-L-methionine.

It belongs to the methyltransferase superfamily. PrmA family.

The protein localises to the cytoplasm. It carries out the reaction L-lysyl-[protein] + 3 S-adenosyl-L-methionine = N(6),N(6),N(6)-trimethyl-L-lysyl-[protein] + 3 S-adenosyl-L-homocysteine + 3 H(+). Its function is as follows. Methylates ribosomal protein L11. This Trichormus variabilis (strain ATCC 29413 / PCC 7937) (Anabaena variabilis) protein is Ribosomal protein L11 methyltransferase.